A 175-amino-acid polypeptide reads, in one-letter code: Sialidase 85-1.3 (175 aa).

It belongs to the glycosyl hydrolase 33 family.

It catalyses the reaction Hydrolysis of alpha-(2-&gt;3)-, alpha-(2-&gt;6)-, alpha-(2-&gt;8)- glycosidic linkages of terminal sialic acid residues in oligosaccharides, glycoproteins, glycolipids, colominic acid and synthetic substrates.. Functionally, developmentally regulated neuraminidase implicated in parasite invasion of cells. May contribute to the pathology during T.cruzi infection by cleaving sialic acid from cells of the immune system. This Trypanosoma cruzi protein is Sialidase 85-1.3 (SA85-1.3).